The following is a 300-amino-acid chain: MSYRELVVELAREHAEALSDALLDLGALSVSVEDADADTPDEQPLFGEPGLVPDRTAWQHSRVVALLSADHEPAVLLAAAANEIGLAETPKFVVREVEEQDWVRLTQSQFEPIPIGERIWVVPSWHDAPDPDALVLELDPGLAFGTGSHPTTRLCMEWLEQSVKPGQSVLDYGCGSGILAILAKKCGANPVIGIDIDPQAVESARQNSERNRAEVTYGLPDACPDGEFDIVVANILSNPLKLMASMLASKVKPGGRIALSGVLARQADEVAAVYARYVDISVWREHEGWVCLAGTRRESH.

Residues Thr-152, Gly-173, Asp-195, and Asn-234 each coordinate S-adenosyl-L-methionine.

This sequence belongs to the methyltransferase superfamily. PrmA family.

It is found in the cytoplasm. The catalysed reaction is L-lysyl-[protein] + 3 S-adenosyl-L-methionine = N(6),N(6),N(6)-trimethyl-L-lysyl-[protein] + 3 S-adenosyl-L-homocysteine + 3 H(+). Its function is as follows. Methylates ribosomal protein L11. This Burkholderia cenocepacia (strain HI2424) protein is Ribosomal protein L11 methyltransferase.